The sequence spans 692 residues: Translation initiation factor IF-2 (692 aa).

The tract at residues 51 to 114 (KAKPENAKKG…KPAETPGKIT (64 aa)) is disordered. Over residues 59–84 (KGQNQKQSNNQQQNRQKQNQKNQSKP) the composition is skewed to low complexity. The span at 85–94 (NKNKKQKGPK) shows a compositional bias: basic residues. One can recognise a tr-type G domain in the interval 193–362 (ERPAVVTIMG…LLVSEVEELK (170 aa)). The interval 202-209 (GHVDHGKT) is G1. 202–209 (GHVDHGKT) serves as a coordination point for GTP. The segment at 227 to 231 (GITQH) is G2. Positions 248–251 (DTPG) are G3. GTP is bound by residues 248–252 (DTPGH) and 302–305 (NKMD). A G4 region spans residues 302 to 305 (NKMD). The tract at residues 338–340 (SAI) is G5.

It belongs to the TRAFAC class translation factor GTPase superfamily. Classic translation factor GTPase family. IF-2 subfamily.

It localises to the cytoplasm. Its function is as follows. One of the essential components for the initiation of protein synthesis. Protects formylmethionyl-tRNA from spontaneous hydrolysis and promotes its binding to the 30S ribosomal subunits. Also involved in the hydrolysis of GTP during the formation of the 70S ribosomal complex. This is Translation initiation factor IF-2 from Oceanobacillus iheyensis (strain DSM 14371 / CIP 107618 / JCM 11309 / KCTC 3954 / HTE831).